The primary structure comprises 951 residues: Protocadherin-20 (951 aa).

The signal sequence occupies residues Met1–Gly60. At Ser61–Leu890 the chain is on the extracellular side. 6 Cadherin domains span residues Arg64–Phe209, Pro210–Phe320, Thr321–Phe535, Leu536–Phe639, Ile640–Val742, and Gln746–Ile863. Asn135 is a glycosylation site (N-linked (GlcNAc...) asparagine). Residues Asn326 and Asn332 are each glycosylated (N-linked (GlcNAc...) asparagine). 5 N-linked (GlcNAc...) asparagine glycosylation sites follow: Asn680, Asn748, Asn803, Asn844, and Asn849. Residues Val891–Ile911 form a helical membrane-spanning segment. Topologically, residues Cys912 to Ile951 are cytoplasmic.

It localises to the cell membrane. Its function is as follows. Potential calcium-dependent cell-adhesion protein. In Homo sapiens (Human), this protein is Protocadherin-20 (PCDH20).